We begin with the raw amino-acid sequence, 272 residues long: Zinc finger protein 32 (272 aa).

Positions R50–Q65 are enriched in basic and acidic residues. The disordered stretch occupies residues R50–P69. 3 consecutive C2H2-type zinc fingers follow at residues Y76 to H98, F104 to H126, and Y132 to H154. Zn(2+)-binding residues include C78, C81, H94, H98, C106, C109, H122, H126, S140, Q143, G156, Y160, F197, K200, L213, A217, C246, C249, H262, and C266. 2 C2H2-type zinc fingers span residues Y160 to H182 and Y188 to H210. The C2H2-type 6 zinc finger occupies Y216–H238. The CCHC-type zinc-finger motif lies at Y244–C266.

The protein belongs to the krueppel C2H2-type zinc-finger protein family.

The protein localises to the nucleus. Its function is as follows. May be involved in transcriptional regulation. The polypeptide is Zinc finger protein 32 (Znf32) (Mus musculus (Mouse)).